The primary structure comprises 1791 residues: Brefeldin A-inhibited guanine nucleotide-exchange protein 2 (1791 aa).

Residue Met-1 is modified to N-acetylmethionine. The tract at residues 2–224 (QESQTKSMFV…KPQSPVIQAT (223 aa)) is DCB; DCB:DCB domain and DCB:HUS domain interaction. 2 disordered regions span residues 208 to 292 (LEKP…DNGA) and 311 to 350 (AAEK…IADD). A phosphoserine mark is found at Ser-214, Ser-218, and Ser-227. Residues 214–225 (SKPQSPVIQATA) show a composition bias toward polar residues. Over residues 233–243 (LKQSQAQSKPT) the composition is skewed to polar residues. The residue at position 244 (Thr-244) is a Phosphothreonine. The span at 244 to 257 (TPEKTELPNGDHAR) shows a compositional bias: basic and acidic residues. Ser-277 bears the Phosphoserine mark. Phosphoserine occurs at positions 355 and 356. An HUS; DCB:HUS domain interaction region spans residues 515–535 (ADAQCVVDIYVNYDCDLNAAN). Position 621 is a phosphoserine (Ser-621). Thr-623 carries the phosphothreonine modification. Ser-624 is modified (phosphoserine). Phosphothreonine is present on Thr-633. One can recognise an SEC7 domain in the interval 661–792 (FNKKPKRGIQ…IIMLTTDLHS (132 aa)). 8 positions are modified to phosphoserine: Ser-707, Ser-1518, Ser-1520, Ser-1521, Ser-1532, Ser-1535, Ser-1541, and Ser-1788.

Homodimer. Interacts with ARFGEF1/BIG1; both proteins are probably part of the same or very similar macromolecular complexes. Interacts with PRKAR1A, PRKAR2A, PRKAR1B, PRKAR2B, PPP1CC, PDE3A, TNFRSF1A, MYCBP and EXOC7. Interacts with GABRB1, GABRB2 and GABRB3. In terms of processing, in vitro phosphorylated by PKA reducing its GEF activity and dephosphorylated by phosphatase PP1. Expressed in brain (at protein level).

The protein localises to the cytoplasm. It localises to the membrane. It is found in the golgi apparatus. The protein resides in the perinuclear region. Its subcellular location is the trans-Golgi network. The protein localises to the endosome. It localises to the cytoskeleton. It is found in the microtubule organizing center. The protein resides in the centrosome. Its subcellular location is the cell projection. The protein localises to the dendrite. It localises to the cytoplasmic vesicle. It is found in the synapse. Inhibited by brefeldin A. In terms of biological role, promotes guanine-nucleotide exchange on ARF1 and ARF3 and to a lower extent on ARF5 and ARF6. Promotes the activation of ARF1/ARF5/ARF6 through replacement of GDP with GTP. Involved in the regulation of Golgi vesicular transport. Required for the integrity of the endosomal compartment. Involved in trafficking from the trans-Golgi network (TGN) to endosomes and is required for membrane association of the AP-1 complex and GGA1. Seems to be involved in recycling of the transferrin receptor from recycling endosomes to the plasma membrane. Probably is involved in the exit of GABA(A) receptors from the endoplasmic reticulum. Involved in constitutive release of tumor necrosis factor receptor 1 via exosome-like vesicles; the function seems to involve PKA and specifically PRKAR2B. Proposed to act as A kinase-anchoring protein (AKAP) and may mediate crosstalk between Arf and PKA pathways. This chain is Brefeldin A-inhibited guanine nucleotide-exchange protein 2 (Arfgef2), found in Rattus norvegicus (Rat).